A 161-amino-acid polypeptide reads, in one-letter code: Nascent polypeptide-associated complex subunit beta (161 aa).

Disordered stretches follow at residues 14–41 and 125–161; these read LSAN…KDDS and QNAQ…ADVE. One can recognise an NAC-A/B domain in the interval 37–102; that stretch reads NKDDSKLQAQ…PQEKSLQDLF (66 aa). Residues 125–134 show a composition bias toward low complexity; it reads QNAQAAAPAT. Residues 135-146 are compositionally biased toward basic and acidic residues; it reads EGHEAGEKKDND.

The protein belongs to the NAC-beta family. Part of the nascent polypeptide-associated complex (NAC), consisting of EGD2 and EGD1. NAC associates with ribosomes via EGD1.

The protein localises to the cytoplasm. It is found in the nucleus. In terms of biological role, component of the nascent polypeptide-associated complex (NAC), a dynamic component of the ribosomal exit tunnel, protecting the emerging polypeptides from interaction with other cytoplasmic proteins to ensure appropriate nascent protein targeting. The NAC complex also promotes mitochondrial protein import by enhancing productive ribosome interactions with the outer mitochondrial membrane and blocks the inappropriate interaction of ribosomes translating non-secretory nascent polypeptides with translocation sites in the membrane of the endoplasmic reticulum. EGD1 may act as a transcription factor that exert a negative effect on the expression of several genes that are transcribed by RNA polymerase II. The chain is Nascent polypeptide-associated complex subunit beta (EGD1) from Eremothecium gossypii (strain ATCC 10895 / CBS 109.51 / FGSC 9923 / NRRL Y-1056) (Yeast).